The sequence spans 505 residues: Pleckstrin homology domain-containing family D member 1 (505 aa).

The PH domain maps to 28 to 136 (KVQLYGVLWK…WLEMLQESGK (109 aa)). Residues 146–391 (EAMIKSLEAQ…KVRNKEKEER (246 aa)) adopt a coiled-coil conformation. Residues 264–284 (DKNQPQPLTNQSEQPPASDGL) are disordered. A compositionally biased stretch (polar residues) spans 267–278 (QPQPLTNQSEQP). Omega-N-methylarginine is present on Arg-502.

The protein belongs to the PLEKHD1 family.

In Mus musculus (Mouse), this protein is Pleckstrin homology domain-containing family D member 1 (Plekhd1).